We begin with the raw amino-acid sequence, 308 residues long: Homoserine kinase (308 aa).

Proline 94–threonine 104 is a binding site for ATP.

This sequence belongs to the GHMP kinase family. Homoserine kinase subfamily.

Its subcellular location is the cytoplasm. It carries out the reaction L-homoserine + ATP = O-phospho-L-homoserine + ADP + H(+). It functions in the pathway amino-acid biosynthesis; L-threonine biosynthesis; L-threonine from L-aspartate: step 4/5. Its function is as follows. Catalyzes the ATP-dependent phosphorylation of L-homoserine to L-homoserine phosphate. This Crocosphaera subtropica (strain ATCC 51142 / BH68) (Cyanothece sp. (strain ATCC 51142)) protein is Homoserine kinase.